The sequence spans 356 residues: S-adenosylmethionine:tRNA ribosyltransferase-isomerase (356 aa).

Belongs to the QueA family. In terms of assembly, monomer.

It is found in the cytoplasm. The enzyme catalyses 7-aminomethyl-7-carbaguanosine(34) in tRNA + S-adenosyl-L-methionine = epoxyqueuosine(34) in tRNA + adenine + L-methionine + 2 H(+). The protein operates within tRNA modification; tRNA-queuosine biosynthesis. Functionally, transfers and isomerizes the ribose moiety from AdoMet to the 7-aminomethyl group of 7-deazaguanine (preQ1-tRNA) to give epoxyqueuosine (oQ-tRNA). The polypeptide is S-adenosylmethionine:tRNA ribosyltransferase-isomerase (Xanthomonas euvesicatoria pv. vesicatoria (strain 85-10) (Xanthomonas campestris pv. vesicatoria)).